A 277-amino-acid chain; its full sequence is Radial spoke head protein 9 homolog (277 aa).

It belongs to the flagellar radial spoke RSP9 family. Component of axonemal radial spoke complexes.

The protein localises to the cytoplasm. It is found in the cytoskeleton. Its subcellular location is the cilium axoneme. The protein resides in the flagellum axoneme. It localises to the cell projection. The protein localises to the kinocilium. Its function is as follows. Functions as part of axonemal radial spoke complexes that play an important part in the motility of sperm and cilia. Essential for both the radial spoke head assembly and the central pair microtubule stability in ependymal motile cilia. Required for motility of olfactory and neural cilia and for the structural integrity of ciliary axonemes in both 9+0 and 9+2 motile cilia. This Xenopus tropicalis (Western clawed frog) protein is Radial spoke head protein 9 homolog (rsph9).